A 78-amino-acid chain; its full sequence is Large ribosomal subunit protein eL20 (78 aa).

The protein belongs to the eukaryotic ribosomal protein eL20 family. In terms of assembly, part of the 50S ribosomal subunit. Binds 23S rRNA.

The protein is Large ribosomal subunit protein eL20 of Nanoarchaeum equitans (strain Kin4-M).